A 1797-amino-acid chain; its full sequence is MDSALQRVIFFGNEFPSDDLKDLFRRLYQHSKDRRFRLLSAFLEESTTVLKDEIAKLPWPLKELVPPFNSVLDLADVDFRQGPLGAAMESSMLTILELGMFIGHYQAEDVEWDLIPERTLLAGLSIGILAAAAVALSSSLADVSKNGAEAVRVSFRLGIYVADISSKLETPQSDGTLKSWAHVVTEMTQASVQDELNQFNTDTHSPELTKVFISAADKTSVSVSGPPSRVKAAFQHSPILRYSKSLPLPVYDGLCHASHLYTRSDIDAIINCAESVIKPDRSVRLALLSSQTGKPFVAKAASELFLEIGTELLTGTIYLDNVTAGIIEHFKLQSEAATKCRIDSFRTSLVLRGIHSAVEAHFAEEQQQFIRCDLVCWVHKDFGPRQPRSHASSKLAIVGMACRLPGGANDLDLFWKLLEDGRDTLTTVPVDRFDLNTHYDPTGKTENATQTPYGNFIDRPGYFDAGFFNMSPREAEQTDPMQRLALVTAYEAMEMAGVVPGRTPSTHPSRIGTFYGQASDDWRELNASQNISTYAVPGGERAFANGRINYFFKFSGPSFNLDTACSSGLAAVQAACSALWAGEIDTAIAGGLNVITDPDNYCGLGNAHFLSKTGQCKVWDKDADGYCRADGIGSVVIKRLEDAEADNDNILAVVLGACTNHSAEAISITHPHAGAQKANYRQVLHQAGVNPIDVSYIELHGTGTQAGDAVESESVSDIFAPVTPRRRPDQRLHLGAVKSNIGHGEAAAGIASLLKALLVYQKNMIPMHIGIKSEINPTIPKDLERRNVGLAMQNTPWPRVEGKKRLAVVNSFGAHGGNTTLLLEDAPEMVKAQNPEDRITHSVLLSAKSKKSLQANMESLLSYLDQHPETNLADLAYTTSSRRMHHNMRFGTAVSCIPALQKALRSQLDNTNFASEVRPIPNEAPSVVLAFTGQGAYYSGMGRELFSEFPYFRSQVQQLDQLAQRLGFPSVVPVIDGSIEDSSKSTILTQLSVVILEIALARFWSLLGVSISAVIGHSLGEYAALAVAGVISAADAIYLVGRRARLVEERCTLGSHSMLSVRASEDAIQQMLASGPDTAAIEYEVSCCNTNQDTVIGGLKDEINDIRKALEAKSIKCTLLDVPYAFHTAQMDPILDDLEAFAAHVPFNAPSIPVLSPLLATAIFDVKSLNANYLRRAARETVDFAAAIEAAQDMGLVDSKTVWIDVGPHPICAGLVRGMIPSVSVVSSCRRNEDSIATICKSLVTLHLAGLTPCWAEFFKPRECEYSLLHLPKYRWNETNYWIPYIGTWTLDKAHLKHGTKPMTPFSLSMSRPSALRTSLIHQITAETIESTTATLHTISDMQHPDFLEAIQGHTMNKCGVATSSIWSDMAFTVGEYLYRLLMPNVKDVHMNLTDVEVLHAQVASKTRGSIQPLVLQAHLDLSTNSMCLSWFNADGETGECAAESFATATVRFEDPAAWKKEWARLAHLVRGRIEALEQRAVEGKASRLSKPLAYALFKNVVDYADRYRGMDSVVLDELEAMAEVTLVPERHGTWHTPPHWIDSVSHLAGLVMNGSDASNTRDYFFVTPGCDSFRLLNKLEPGAQYRSYVRMFPLLEDPNMHGGDVYILQGEEIVGMVGMIRFRRVPRLLMDRFFSPPTTTSVVGPAPPVVSAATKTHGITQSVPEISAPSPSIVVSDSTANNTLTDKLPVPVPRLASSSESSTPKESPIATPPESESAEPLGNTVSQCLRLMARETGLEVEALTGDASFVQLGVDSLMSLVLSEKFRAELGVEIKSSLFLECPTIGEMTAWIEEYC.

The interval 17 to 256 (SDDLKDLFRR…PLPVYDGLCH (240 aa)) is N-terminal acylcarrier protein transacylase domain (SAT). Positions 392-825 (SSKLAIVGMA…GGNTTLLLED (434 aa)) constitute a Ketosynthase family 3 (KS3) domain. Active-site for beta-ketoacyl synthase activity residues include Cys-565, His-700, and His-743. The tract at residues 931–1251 (FTGQGAYYSG…SLVTLHLAGL (321 aa)) is malonyl-CoA:ACP transacylase (MAT) domain. Residues 1318–1637 (TSLIHQITAE…RLLMDRFFSP (320 aa)) form a product template (PT) domain region. Residues 1322 to 1458 (HQITAETIES…ATVRFEDPAA (137 aa)) form an N-terminal hotdog fold region. In terms of domain architecture, PKS/mFAS DH spans 1322-1632 (HQITAETIES…FRRVPRLLMD (311 aa)). His-1354 functions as the Proton acceptor; for dehydratase activity in the catalytic mechanism. The interval 1482-1632 (VEGKASRLSK…FRRVPRLLMD (151 aa)) is C-terminal hotdog fold. Asp-1543 acts as the Proton donor; for dehydratase activity in catalysis. Over residues 1663–1686 (SVPEISAPSPSIVVSDSTANNTLT) the composition is skewed to polar residues. The tract at residues 1663–1723 (SVPEISAPSP…PESESAEPLG (61 aa)) is disordered. A compositionally biased stretch (low complexity) spans 1698-1709 (SSSESSTPKESP). The Carrier domain occupies 1720 to 1797 (EPLGNTVSQC…EMTAWIEEYC (78 aa)). At Ser-1757 the chain carries O-(pantetheine 4'-phosphoryl)serine.

Requires pantetheine 4'-phosphate as cofactor.

It participates in secondary metabolite biosynthesis. Its function is as follows. Non-reducing polyketide synthase; part of the gene cluster that mediates the biosynthesis of neosartoricin B, a prenylated anthracenone that probably exhibits T-cell antiproliferative activity, suggestive of a physiological role as an immunosuppressive agent. The non-reducing polyketide synthase nscA probably synthesizes and cyclizes the decaketide backbone. The hydrolase nscB then mediates the product release through hydrolysis followed by spontaneous decarboxylation. The prenyltransferase nscD catalyzes the addition of the dimethylallyl group to the aromatic C5. The FAD-dependent monooxygenase nscC is then responsible for the stereospecific hydroxylation at C2. Neosartoricin B can be converted into two additional compounds neosartoricins C and D. Neosartoricin C is a spirocyclic compound that is cyclized through the attack of C3 hydroxyl on C14, followed by dehydration. On the other hand, neosartoricin D is a further cyclized compound in which attack of C2 on C14 in neosartoricin C results in the formation of the acetal-containing dioxabicyclo-octanone ring. Both of these compounds are novel and possibly represent related metabolites of the gene cluster. This Arthroderma gypseum (strain ATCC MYA-4604 / CBS 118893) (Microsporum gypseum) protein is Non-reducing polyketide synthase nscA.